The primary structure comprises 179 residues: M-zodatoxin-Lt4b (179 aa).

Positions 1-22 (MKFSIIALALAVAFVCVAESRS) are cleaved as a signal peptide. The propeptide occupies 23-43 (EEEGYDVSEEIQAEELEEAAR). The Processing quadruplet motif 1 signature appears at 40–43 (EAAR). Glutamine 61 is modified (glutamine amide). The Inverted processing quadruplet motif 1 signature appears at 63–66 (REDS). A propeptide spanning residues 63 to 71 (REDSEDAGR) is cleaved from the precursor. Residues 68–71 (DAGR) carry the Processing quadruplet motif 2 motif. Glutamine 89 is subject to Glutamine amide. Positions 91–94 (REDT) match the Inverted processing quadruplet motif 2 motif. The propeptide occupies 91-99 (REDTEEAGR). The short motif at 96-99 (EAGR) is the Processing quadruplet motif 3 element. The residue at position 117 (glutamine 117) is a Glutamine amide. An Inverted processing quadruplet motif 3 motif is present at residues 119-122 (REDS). A propeptide spanning residues 119–127 (REDSEEAGR) is cleaved from the precursor. A Processing quadruplet motif 4 motif is present at residues 124–127 (EAGR). Glutamine 145 is modified (glutamine amide). Positions 147 to 150 (REDT) match the Inverted processing quadruplet motif 4 motif. The propeptide occupies 147–154 (REDTEEAR). The Processing quadruplet motif 5 motif lies at 151–154 (EEAR). The residue at position 178 (phenylalanine 178) is a Phenylalanine amide.

This sequence belongs to the cationic peptide 03 (latarcin) family. 04 subfamily. Cleavage of the propeptide depends on the processing quadruplet motif (PQM) (XXXR, with at least one of X being E) and the inverted PQM (RXXX, with at least one of X being E). In terms of tissue distribution, expressed by the venom gland.

Its subcellular location is the secreted. Functionally, M-zodatoxin-Lt4b: Has antimicrobial activity against Gram-positive bacteria (A.globiformis VKM Ac-1112 (MIC=0.3 uM), and B.subtilis VKM B-501 (MIC=1.1 uM)), Gram-negative bacteria (E.coli DH5-alpha (MIC=4.4 uM), E.coli MH1 (MIC=4.4 uM), and P.aeruginosa PAO1 (MIC=&gt;35 uM)), and yeasts (P.pastoris GS115 (MIC=&gt;35 uM), and S.cerevisiae Y190 (MIC=35 uM)). Does not have hemolytic activity against rabbit erythrocytes. Causes paralysis, but is not lethal when injected into insect (M.domestica) larvae. Shows no antimicrobial activity against Gram-positive bacterium B.subtilis B-501 or Gram-negative bacterium E.coli DH5-alpha at concentration up to 20 uM. This Lachesana tarabaevi (Spider) protein is M-zodatoxin-Lt4b.